The sequence spans 415 residues: Serine hydroxymethyltransferase (415 aa).

(6S)-5,6,7,8-tetrahydrofolate-binding positions include Leu115 and 119 to 121 (GHL). Residue Lys224 is modified to N6-(pyridoxal phosphate)lysine. (6S)-5,6,7,8-tetrahydrofolate is bound at residue 348-350 (SPF).

This sequence belongs to the SHMT family. Homodimer. Pyridoxal 5'-phosphate is required as a cofactor.

Its subcellular location is the cytoplasm. It carries out the reaction (6R)-5,10-methylene-5,6,7,8-tetrahydrofolate + glycine + H2O = (6S)-5,6,7,8-tetrahydrofolate + L-serine. It functions in the pathway one-carbon metabolism; tetrahydrofolate interconversion. The protein operates within amino-acid biosynthesis; glycine biosynthesis; glycine from L-serine: step 1/1. Catalyzes the reversible interconversion of serine and glycine with tetrahydrofolate (THF) serving as the one-carbon carrier. This reaction serves as the major source of one-carbon groups required for the biosynthesis of purines, thymidylate, methionine, and other important biomolecules. Also exhibits THF-independent aldolase activity toward beta-hydroxyamino acids, producing glycine and aldehydes, via a retro-aldol mechanism. In Latilactobacillus sakei subsp. sakei (strain 23K) (Lactobacillus sakei subsp. sakei), this protein is Serine hydroxymethyltransferase.